The following is a 200-amino-acid chain: Small ribosomal subunit protein uS4 (200 aa).

The 64-residue stretch at 92-155 (SRLDAVVYSL…QNLDIIKESV (64 aa)) folds into the S4 RNA-binding domain.

The protein belongs to the universal ribosomal protein uS4 family. As to quaternary structure, part of the 30S ribosomal subunit. Contacts protein S5. The interaction surface between S4 and S5 is involved in control of translational fidelity.

Its function is as follows. One of the primary rRNA binding proteins, it binds directly to 16S rRNA where it nucleates assembly of the body of the 30S subunit. In terms of biological role, with S5 and S12 plays an important role in translational accuracy. In Staphylococcus haemolyticus (strain JCSC1435), this protein is Small ribosomal subunit protein uS4.